The sequence spans 378 residues: Geraniol dehydrogenase (378 aa).

Residues C48, H75, C105, C108, C111, C119, and C179 each contribute to the Zn(2+) site.

The protein belongs to the zinc-containing alcohol dehydrogenase family. As to quaternary structure, monomer. Requires Zn(2+) as cofactor.

It carries out the reaction (2E)-geraniol + NAD(+) = (2E)-geranial + NADH + H(+). The enzyme catalyses (2E,6E)-farnesol + NAD(+) = (2E,6E)-farnesal + NADH + H(+). In terms of biological role, catalyzes the NAD(+)-dependent oxidation of geraniol to geranial, playing an important role in the biosynthesis of neral, an alarm pheromone. Cannot use NADP(+). Also acts as a farnesol dehydrogenase by catalyzing the oxidation of (2E,6E)-farnesol to (2E,6E)-farnesal, with lower activity compared to geraniol dehydrogenase activity. This is Geraniol dehydrogenase from Carpoglyphus lactis (Dried fruit mite).